The primary structure comprises 187 residues: Chlorobenzene dioxygenase subunit beta (187 aa).

The protein belongs to the bacterial ring-hydroxylating dioxygenase beta subunit family. This dioxygenase system consists of four proteins: the two subunits of the oxygenase component (TecA1 and TecA2), a ferredoxin (TecA3) and a ferredoxin reductase (TecA4).

It carries out the reaction chlorobenzene + NADH + O2 + H(+) = (1R,2R)-3-chlorocyclohexa-3,5-diene-1,2-diol + NAD(+). It functions in the pathway aromatic compound metabolism. Functionally, part of the oxygenase component of the chlorobenzene dioxygenase system that catalyzes the dihydroxylation of a range of aromatic compounds, including chlorinated benzenes and toluenes, and dinuclear aromatics such as biphenyl and dibenzo-p-dioxin. The beta subunit is not directly involved in the control of substrate specificity. In Cupriavidus sp. (strain PS12), this protein is Chlorobenzene dioxygenase subunit beta.